Here is a 433-residue protein sequence, read N- to C-terminus: MGTFKIYPGKLKGEVKTPPSKSMAHRGVICAALGDGISKIRNINYSDDIIATINAMRSLGAIITKEDEYLHVIGIKSEKCKKNIELNRTIDCNESGSTLRFLVPISCIFEGSSRFIGRGNLGKRPLDTYYEIFDNQGIKHSYKKGKLDLRIEGILKCGEFKLRGDISSQFISGMLFTLPLLEGDSKVIITTDLESKGYIDLTLSAMSDFGIEIINNNYREFIIKGNQTYKSRNYRIEGDYSQAAFFLVADALKSEVFINDLNLESLQGDKEVIEILERMNMKIKNIDNGLLGIQRENLGSTIIDGSQCPDIIPVISLAASLCNGRTEIINVGRLRIKECDRLSAVASELNKLGAHIIEKEDSLIIDGVKTLKGGVKVWSHKDHRIAMMLAIASTVCMEPIILEDYECISKSYPAFFDDFKALGGNFHEWNLGE.

3-phosphoshikimate contacts are provided by Lys-21, Ser-22, and Arg-26. Phosphoenolpyruvate is bound at residue Lys-21. 2 residues coordinate phosphoenolpyruvate: Gly-96 and Arg-124. Ser-167, Ser-168, Gln-169, Ser-195, Asp-310, and Lys-337 together coordinate 3-phosphoshikimate. Gln-169 serves as a coordination point for phosphoenolpyruvate. Asp-310 acts as the Proton acceptor in catalysis. 3 residues coordinate phosphoenolpyruvate: Arg-341, Arg-384, and Lys-410.

Belongs to the EPSP synthase family. As to quaternary structure, monomer.

The protein resides in the cytoplasm. The catalysed reaction is 3-phosphoshikimate + phosphoenolpyruvate = 5-O-(1-carboxyvinyl)-3-phosphoshikimate + phosphate. The protein operates within metabolic intermediate biosynthesis; chorismate biosynthesis; chorismate from D-erythrose 4-phosphate and phosphoenolpyruvate: step 6/7. In terms of biological role, catalyzes the transfer of the enolpyruvyl moiety of phosphoenolpyruvate (PEP) to the 5-hydroxyl of shikimate-3-phosphate (S3P) to produce enolpyruvyl shikimate-3-phosphate and inorganic phosphate. The protein is 3-phosphoshikimate 1-carboxyvinyltransferase of Clostridium botulinum (strain Eklund 17B / Type B).